The sequence spans 152 residues: MKTFFLKEKQINKKWFVIDAEGLVVGRLAAFVATLLRGKHKPEYTPHMDCGDNVIIINAERVHFTGKKLKDKIYYKHTGYSGGLKKTTPDNILNGKFPERVIEMAVKRMLDDGPMARRRFENLYVYSGSEHKHQGQQPEKIDFASLNRKNKK.

The protein belongs to the universal ribosomal protein uL13 family. As to quaternary structure, part of the 50S ribosomal subunit.

This protein is one of the early assembly proteins of the 50S ribosomal subunit, although it is not seen to bind rRNA by itself. It is important during the early stages of 50S assembly. The polypeptide is Large ribosomal subunit protein uL13 (Wolbachia pipientis wMel).